The following is a 252-amino-acid chain: Imidazole glycerol phosphate synthase subunit HisF (252 aa).

Active-site residues include D13 and D132.

This sequence belongs to the HisA/HisF family. As to quaternary structure, heterodimer of HisH and HisF.

The protein localises to the cytoplasm. It catalyses the reaction 5-[(5-phospho-1-deoxy-D-ribulos-1-ylimino)methylamino]-1-(5-phospho-beta-D-ribosyl)imidazole-4-carboxamide + L-glutamine = D-erythro-1-(imidazol-4-yl)glycerol 3-phosphate + 5-amino-1-(5-phospho-beta-D-ribosyl)imidazole-4-carboxamide + L-glutamate + H(+). Its pathway is amino-acid biosynthesis; L-histidine biosynthesis; L-histidine from 5-phospho-alpha-D-ribose 1-diphosphate: step 5/9. Functionally, IGPS catalyzes the conversion of PRFAR and glutamine to IGP, AICAR and glutamate. The HisF subunit catalyzes the cyclization activity that produces IGP and AICAR from PRFAR using the ammonia provided by the HisH subunit. The chain is Imidazole glycerol phosphate synthase subunit HisF from Campylobacter fetus subsp. fetus (strain 82-40).